The following is a 199-amino-acid chain: Thymidylate kinase (199 aa).

ATP is bound at residue 7–14 (GIDGSGKS).

The protein belongs to the thymidylate kinase family.

The enzyme catalyses dTMP + ATP = dTDP + ADP. Phosphorylation of dTMP to form dTDP in both de novo and salvage pathways of dTTP synthesis. The chain is Thymidylate kinase from Thermosipho melanesiensis (strain DSM 12029 / CIP 104789 / BI429).